A 282-amino-acid chain; its full sequence is Pantothenate synthetase (282 aa).

30 to 37 (MGALHAGH) is a binding site for ATP. H37 (proton donor) is an active-site residue. Q61 contributes to the (R)-pantoate binding site. Q61 contributes to the beta-alanine binding site. 147–150 (GEKD) is a binding site for ATP. Q153 serves as a coordination point for (R)-pantoate. ATP contacts are provided by residues V176 and 184 to 187 (LSSR).

This sequence belongs to the pantothenate synthetase family. In terms of assembly, homodimer.

Its subcellular location is the cytoplasm. It catalyses the reaction (R)-pantoate + beta-alanine + ATP = (R)-pantothenate + AMP + diphosphate + H(+). It participates in cofactor biosynthesis; (R)-pantothenate biosynthesis; (R)-pantothenate from (R)-pantoate and beta-alanine: step 1/1. In terms of biological role, catalyzes the condensation of pantoate with beta-alanine in an ATP-dependent reaction via a pantoyl-adenylate intermediate. This Bacteroides fragilis (strain ATCC 25285 / DSM 2151 / CCUG 4856 / JCM 11019 / LMG 10263 / NCTC 9343 / Onslow / VPI 2553 / EN-2) protein is Pantothenate synthetase.